Consider the following 450-residue polypeptide: 3-phosphoshikimate 1-carboxyvinyltransferase (450 aa).

3-phosphoshikimate-binding residues include Lys28, Ser29, and Arg33. Lys28 is a binding site for phosphoenolpyruvate. Phosphoenolpyruvate contacts are provided by Gly100 and Arg128. The 3-phosphoshikimate site is built by Ser173, Gln175, Asp326, and Lys353. Gln175 lines the phosphoenolpyruvate pocket. The active-site Proton acceptor is the Asp326. Phosphoenolpyruvate contacts are provided by Arg357 and Arg402.

The protein belongs to the EPSP synthase family. In terms of assembly, monomer.

It is found in the cytoplasm. It catalyses the reaction 3-phosphoshikimate + phosphoenolpyruvate = 5-O-(1-carboxyvinyl)-3-phosphoshikimate + phosphate. Its pathway is metabolic intermediate biosynthesis; chorismate biosynthesis; chorismate from D-erythrose 4-phosphate and phosphoenolpyruvate: step 6/7. Catalyzes the transfer of the enolpyruvyl moiety of phosphoenolpyruvate (PEP) to the 5-hydroxyl of shikimate-3-phosphate (S3P) to produce enolpyruvyl shikimate-3-phosphate and inorganic phosphate. The sequence is that of 3-phosphoshikimate 1-carboxyvinyltransferase from Brucella canis (strain ATCC 23365 / NCTC 10854 / RM-666).